We begin with the raw amino-acid sequence, 215 residues long: Large ribosomal subunit protein uL3 (215 aa).

Gln156 bears the N5-methylglutamine mark.

The protein belongs to the universal ribosomal protein uL3 family. In terms of assembly, part of the 50S ribosomal subunit. Forms a cluster with proteins L14 and L19. In terms of processing, methylated by PrmB.

Functionally, one of the primary rRNA binding proteins, it binds directly near the 3'-end of the 23S rRNA, where it nucleates assembly of the 50S subunit. This is Large ribosomal subunit protein uL3 from Xylella fastidiosa (strain M23).